We begin with the raw amino-acid sequence, 195 residues long: Dephospho-CoA kinase (195 aa).

A DPCK domain is found at Ile2–Ser195. Gly10–Phe15 serves as a coordination point for ATP.

The protein belongs to the CoaE family.

It is found in the cytoplasm. The catalysed reaction is 3'-dephospho-CoA + ATP = ADP + CoA + H(+). It functions in the pathway cofactor biosynthesis; coenzyme A biosynthesis; CoA from (R)-pantothenate: step 5/5. In terms of biological role, catalyzes the phosphorylation of the 3'-hydroxyl group of dephosphocoenzyme A to form coenzyme A. The polypeptide is Dephospho-CoA kinase (Wolbachia sp. subsp. Brugia malayi (strain TRS)).